The following is a 1175-amino-acid chain: Potassium/sodium hyperpolarization-activated cyclic nucleotide-gated channel 4 (1175 aa).

Residues 1-259 (MDKLPPSMRK…SAGFWIIHPY (259 aa)) lie on the Cytoplasmic side of the membrane. Residues 17–186 (QQVGAKAWIM…SSCGEQRPAD (170 aa)) form a disordered region. Over residues 26-36 (MDEEEDAEEEG) the composition is skewed to acidic residues. Over residues 60 to 75 (PSAAAAAAGGAESRGA) the composition is skewed to low complexity. Residues 111-126 (SRGGGGGGGSTGGGSH) show a composition bias toward gly residues. Basic and acidic residues predominate over residues 128 to 140 (HLHDSAEERRLIA). Residue S145 is modified to Phosphoserine. Residues 162–175 (PGAPAPPAASPPQV) show a composition bias toward pro residues. The chain crosses the membrane as a helical span at residues 260–288 (SDFRFYWDLTMLLLMVGNLIIIPVGITFF). At 289–292 (KDEN) the chain is on the extracellular side. Residues 293-316 (TTPWIVFNVVSDTFFLIDLVLNFR) traverse the membrane as a helical segment. Residues 317-329 (TGIVVEDNTDIIL) are Cytoplasmic-facing. The helical transmembrane segment at 330 to 352 (DPRRIKMKYLKSWFVVDFVSSIP) threads the bilayer. At 353-374 (VDYIFLIVETRIDSEVYKTARA) the chain is on the extracellular side. A helical; Voltage-sensor membrane pass occupies residues 375–410 (LRIVRFTKILSLLRLLRLSRLIRYIHQWEEIFHMTY). Over 411-413 (DLA) the chain is Cytoplasmic. A helical membrane pass occupies residues 414–444 (SAVVRIVNLIGMMLLLCHWDGCLQFLVPMLQ). At 445-449 (DFPDD) the chain is on the extracellular side. The pore-forming intramembrane region spans 450–478 (CWVSLNNMVNNSWGKQYSYALFKAMSHML). At 479–488 (CIGYGRQAPM) the chain is on the extracellular side. Residues 489 to 521 (GMSDVWLTMLSMIVGATCYAMFIGHATALIQSL) traverse the membrane as a helical segment. The Cytoplasmic segment spans residues 522–1175 (DSSRRQYQEK…PVRSKLPSNL (654 aa)). 4 residues coordinate 3',5'-cyclic GMP: Y560, K563, F565, and E567. The 3',5'-cyclic AMP site is built by G660, E661, C663, R670, T671, V674, and R711. Disordered regions lie at residues 801-820 (AIFR…AGQT) and 830-1175 (LAPS…PSNL). Low complexity-rich tracts occupy residues 839 to 854 (SPAS…SSAS), 900 to 912 (LGGS…SPLL), 948 to 966 (SPTS…LSPG), and 984 to 1004 (RLPF…SPRG). Over residues 1038-1050 (ASSPPPPPPPPAP) the composition is skewed to pro residues. Phosphoserine occurs at positions 1089 and 1093. The segment covering 1102–1114 (PPFPRAPGRPPGA) has biased composition (pro residues).

This sequence belongs to the potassium channel HCN family. In terms of assembly, homotetramer. The channel is composed of a homo- or heterotetrameric complex of pore-forming subunits. Interacts with PEX5L with a 4:4 HCN4:PEX5L stoichiometry; reduces the effects of cAMP on the voltage-dependence and rate of activation. Interacts with IRAG1; regulates HCN4 channel activity. Interacts with IRAG2; regulates HCN4 channel activity. In terms of processing, S-palmitoylated. In terms of tissue distribution, highly expressed in the heart sinoatrial node (SAN). Not detected in atrium, ventricle, forebrain or cerebellum. Detected at very low levels in total brain.

It localises to the cell membrane. The enzyme catalyses K(+)(in) = K(+)(out). It carries out the reaction Na(+)(in) = Na(+)(out). Its activity is regulated as follows. Activated by cAMP and to a lesser extent by cGMP and cCMP. cAMP binding causes a conformation change that leads to the assembly of an active tetramer and channel opening by shifting the voltage-dependency towards more positive voltages. Binding of cAMP removes a tonic inhibition conferred by cyclic nucleotide-binding domain (CNBD) on channel opening. Cyclic dinucleotides can modulate HCN4 channel; cyclic dinucleotides acting as potent antagonists of cAMP. Inhibited by extracellular Cs(+) ions. Auxiliary subunits can also regulate HCN4 channel. IRAG1 causes a gain-of-function by shifting HCN4 activation to more depolarized membrane potentials in the absence of cAMP. In contrast, IRAG2 causes a loss-of-function by inhibiting cAMP-dependent potentiation of HCN4 activation. Its function is as follows. Hyperpolarization-activated ion channel that are permeable to Na(+) and K(+) ions with very slow activation and inactivation. Exhibits higher selectivity for K(+) over Na(+) ions. Contributes to the native pacemaker currents in heart (If) that regulate the rhythm of heart beat. Contributes to the native pacemaker currents in neurons (Ih). May mediate responses to sour stimuli. The chain is Potassium/sodium hyperpolarization-activated cyclic nucleotide-gated channel 4 (HCN4) from Oryctolagus cuniculus (Rabbit).